Consider the following 509-residue polypeptide: DNA primase DnaG (509 aa).

A Toprim domain is found at Asp167–Val253. Positions 173, 215, and 217 each coordinate Mg(2+). The interval Lys267 to Leu411 is disordered. Low complexity-rich tracts occupy residues Pro313–Ala331 and Glu383–Ala402.

This sequence belongs to the archaeal DnaG primase family. In terms of assembly, forms a ternary complex with MCM helicase and DNA. Requires Mg(2+) as cofactor.

It carries out the reaction ssDNA + n NTP = ssDNA/pppN(pN)n-1 hybrid + (n-1) diphosphate.. Functionally, RNA polymerase that catalyzes the synthesis of short RNA molecules used as primers for DNA polymerase during DNA replication. This is DNA primase DnaG from Natronomonas pharaonis (strain ATCC 35678 / DSM 2160 / CIP 103997 / JCM 8858 / NBRC 14720 / NCIMB 2260 / Gabara) (Halobacterium pharaonis).